The chain runs to 260 residues: Exosome complex component Rrp42 (260 aa).

The protein belongs to the RNase PH family. Rrp42 subfamily. In terms of assembly, component of the archaeal exosome complex. Forms a hexameric ring-like arrangement composed of 3 Rrp41-Rrp42 heterodimers. The hexameric ring associates with a trimer of Rrp4 and/or Csl4 subunits.

It localises to the cytoplasm. Functionally, non-catalytic component of the exosome, which is a complex involved in RNA degradation. Contributes to the structuring of the Rrp41 active site. This Thermoplasma acidophilum (strain ATCC 25905 / DSM 1728 / JCM 9062 / NBRC 15155 / AMRC-C165) protein is Exosome complex component Rrp42.